We begin with the raw amino-acid sequence, 272 residues long: Hemin import ATP-binding protein HmuV (272 aa).

The ABC transporter domain maps to L2–R255. An ATP-binding site is contributed by G34 to S41.

The protein belongs to the ABC transporter superfamily. Heme (hemin) importer (TC 3.A.1.14.5) family. The complex is composed of two ATP-binding proteins (HmuV), two transmembrane proteins (HmuU) and a solute-binding protein (HmuT).

The protein resides in the cell inner membrane. In terms of biological role, part of the ABC transporter complex HmuTUV involved in hemin import. Responsible for energy coupling to the transport system. This Burkholderia pseudomallei (strain 1710b) protein is Hemin import ATP-binding protein HmuV.